An 884-amino-acid chain; its full sequence is Formin-like protein 11 (884 aa).

Positions 1–18 (MVYFRQIFLMIIVVSLHC) are cleaved as a signal peptide. The interval 89–143 (AESASFSPWPAPSPSPFPNGGPIESPAYPPAPPRPIPPHLRRPLPQRTHPLEQPE) is disordered. Pro residues-rich tracts occupy residues 97–107 (WPAPSPSPFPN) and 115–126 (AYPPAPPRPIPP). The chain crosses the membrane as a helical span at residues 158–178 (ILVPVVASTASAIGFVVCVVG). 3 disordered regions span residues 307–384 (SSDD…FSNK), 416–469 (SFPI…APLP), and 512–532 (MQSS…GKHL). The span at 329–343 (SNASSASGSVNVGSS) shows a compositional bias: low complexity. Positions 346 to 358 (FSEHKLDIPECSR) are enriched in basic and acidic residues. Pro residues-rich tracts occupy residues 367-379 (APPP…PPLP) and 425-436 (QPRPPPPPPPPQ). The region spanning 461 to 884 (LGKDGAPLPK…NSPSPLAPFR (424 aa)) is the FH2 domain.

Belongs to the formin-like family. Class-I subfamily.

The protein localises to the membrane. In terms of biological role, might be involved in the organization and polarity of the actin cytoskeleton. In Arabidopsis thaliana (Mouse-ear cress), this protein is Formin-like protein 11 (FH11).